Reading from the N-terminus, the 153-residue chain is MTKVKAAPEESEAQAEGCSEERTYKELLVNLNPIAQPLASRRLTRKLYKCIKKAVKQKQIRRGVKEVQKFVNKGEKGIMVLAGDTLPIEVYCHLPVLCEDQNLPYVYIPSKTDLGAATGSKRPTCVIMVKPHEEYQETYDKCLEEVQALPTPL.

A Glycyl lysine isopeptide (Lys-Gly) (interchain with G-Cter in SUMO2) cross-link involves residue lysine 3. Lysine 5 is covalently cross-linked (Glycyl lysine isopeptide (Lys-Gly) (interchain with G-Cter in SUMO); alternate). A Glycyl lysine isopeptide (Lys-Gly) (interchain with G-Cter in SUMO1); alternate cross-link involves residue lysine 5. Lysine 5 participates in a covalent cross-link: Glycyl lysine isopeptide (Lys-Gly) (interchain with G-Cter in SUMO2); alternate. The residue at position 19 (serine 19) is a Phosphoserine.

Belongs to the eukaryotic ribosomal protein eL8 family. As to quaternary structure, part of the H/ACA small nucleolar ribonucleoprotein (H/ACA snoRNP) complex, which contains NHP2/NOLA2, GAR1/NOLA1, NOP10/NOLA3, and DKC1/NOLA4, which is presumed to be the catalytic subunit. The complex contains a stable core formed by binding of one or two NOP10-DKC1 heterodimers to NHP2; GAR1 subsequently binds to this core via DKC1. The complex binds a box H/ACA small nucleolar RNA (snoRNA), which may target the specific site of modification within the RNA substrate. During assembly, the complex contains NAF1 instead of GAR1/NOLA1. The complex also interacts with TERC, which contains a 3'-terminal domain related to the box H/ACA snoRNAs. Specific interactions with snoRNAs or TERC are mediated by GAR1 and NHP2. Associates with NOLC1/NOPP140. H/ACA snoRNPs interact with the SMN complex, consisting of SMN1 or SMN2, GEMIN2/SIP1, DDX20/GEMIN3, and GEMIN4. This is mediated by interaction between GAR1 and SMN1 or SMN2. The SMN complex may be required for correct assembly of the H/ACA snoRNP complex. Component of the telomerase holoenzyme complex composed of one molecule of TERT, one molecule of WRAP53/TCAB1, two molecules of H/ACA ribonucleoprotein complex subunits DKC1, NOP10, NHP2 and GAR1, and a telomerase RNA template component (TERC). The telomerase holoenzyme complex is associated with TEP1, SMG6/EST1A and POT1.

The protein localises to the nucleus. It localises to the nucleolus. Its subcellular location is the cajal body. In terms of biological role, required for ribosome biogenesis and telomere maintenance. Part of the H/ACA small nucleolar ribonucleoprotein (H/ACA snoRNP) complex, which catalyzes pseudouridylation of rRNA. This involves the isomerization of uridine such that the ribose is subsequently attached to C5, instead of the normal N1. Each rRNA can contain up to 100 pseudouridine ('psi') residues, which may serve to stabilize the conformation of rRNAs. May also be required for correct processing or intranuclear trafficking of TERC, the RNA component of the telomerase reverse transcriptase (TERT) holoenzyme. In Mus musculus (Mouse), this protein is H/ACA ribonucleoprotein complex subunit 2 (Nhp2).